Consider the following 398-residue polypeptide: tRNA-specific 2-thiouridylase MnmA (398 aa).

Residues A20–S27 and L46 each bind ATP. The Nucleophile role is filled by C114. Residues C114 and C210 are joined by a disulfide bond. Residue G138 coordinates ATP. The interval R160–Q162 is interaction with tRNA. The active-site Cysteine persulfide intermediate is C210.

This sequence belongs to the MnmA/TRMU family.

Its subcellular location is the cytoplasm. It carries out the reaction S-sulfanyl-L-cysteinyl-[protein] + uridine(34) in tRNA + AH2 + ATP = 2-thiouridine(34) in tRNA + L-cysteinyl-[protein] + A + AMP + diphosphate + H(+). In terms of biological role, catalyzes the 2-thiolation of uridine at the wobble position (U34) of tRNA, leading to the formation of s(2)U34. In Brucella suis (strain ATCC 23445 / NCTC 10510), this protein is tRNA-specific 2-thiouridylase MnmA.